The primary structure comprises 379 residues: Probable leucine aminopeptidase TRV_05286 (379 aa).

Positions 1–18 are cleaved as a signal peptide; that stretch reads MKIATLAVVSAFAATAIA. Zn(2+)-binding residues include His-182 and Asp-201. Residues Asn-202 and Asn-226 are each glycosylated (N-linked (GlcNAc...) asparagine). Zn(2+)-binding residues include Glu-240 and Asp-267. Cys-312 and Cys-316 are disulfide-bonded. His-345 lines the Zn(2+) pocket.

It belongs to the peptidase M28 family. M28E subfamily. In terms of assembly, monomer. Requires Zn(2+) as cofactor.

It is found in the secreted. Functionally, probable extracellular aminopeptidase which contributes to pathogenicity. This chain is Probable leucine aminopeptidase TRV_05286, found in Trichophyton verrucosum (strain HKI 0517).